The sequence spans 143 residues: Na(+)/H(+) antiporter subunit B (143 aa).

The next 4 helical transmembrane spans lie at 9–31, 36–58, 71–93, and 117–139; these read LILQ…YLFL, APGG…LLAY, FIYV…FVFG, and ATIF…IQTI.

The protein belongs to the CPA3 antiporters (TC 2.A.63) subunit B family. In terms of assembly, forms a heterooligomeric complex that consists of seven subunits: MrpA, MrpB, MrpC, MrpD, MrpE, MrpF and MrpG.

It localises to the cell membrane. Its function is as follows. Mrp complex is a Na(+)/H(+) antiporter that is considered to be the major Na(+) excretion system in B.subtilis. Has a major role in Na(+) resistance and a minor role in Na(+)- and K(+)-dependent pH homeostasis as compared to TetB. MrpA may be the actual Na(+)/H(+) antiporter, although the six other Mrp proteins are all required for Na(+)/H(+) antiport activity and Na(+) resistance. MrpA is required for initiation of sporulation when external Na(+) concentration increases. Also transports Li(+) but not K(+), Ca(2+) or Mg(2+). The polypeptide is Na(+)/H(+) antiporter subunit B (mrpB) (Bacillus subtilis (strain 168)).